The primary structure comprises 214 residues: Holliday junction branch migration complex subunit RuvA (214 aa).

Residues 1-67 form a domain I region; it reads MVGWLKGLIV…ADNWQFFGFK (67 aa). The tract at residues 68–146 is domain II; the sequence is STQERDIFRE…AFAGMDPAPS (79 aa). The interval 147-154 is flexible linker; sequence LAEGVSSE. The domain III stretch occupies residues 155 to 214; the sequence is QMPESGADVEATLSMLGYDDLEVRRAIRAIAEGSDGPPPPGDDQDAWLRGCLQWLSRDSA.

This sequence belongs to the RuvA family. In terms of assembly, homotetramer. Forms an RuvA(8)-RuvB(12)-Holliday junction (HJ) complex. HJ DNA is sandwiched between 2 RuvA tetramers; dsDNA enters through RuvA and exits via RuvB. An RuvB hexamer assembles on each DNA strand where it exits the tetramer. Each RuvB hexamer is contacted by two RuvA subunits (via domain III) on 2 adjacent RuvB subunits; this complex drives branch migration. In the full resolvosome a probable DNA-RuvA(4)-RuvB(12)-RuvC(2) complex forms which resolves the HJ.

Its subcellular location is the cytoplasm. Its function is as follows. The RuvA-RuvB-RuvC complex processes Holliday junction (HJ) DNA during genetic recombination and DNA repair, while the RuvA-RuvB complex plays an important role in the rescue of blocked DNA replication forks via replication fork reversal (RFR). RuvA specifically binds to HJ cruciform DNA, conferring on it an open structure. The RuvB hexamer acts as an ATP-dependent pump, pulling dsDNA into and through the RuvAB complex. HJ branch migration allows RuvC to scan DNA until it finds its consensus sequence, where it cleaves and resolves the cruciform DNA. This Synechococcus sp. (strain CC9605) protein is Holliday junction branch migration complex subunit RuvA.